Here is a 223-residue protein sequence, read N- to C-terminus: Endonuclease NucS (223 aa).

It belongs to the NucS endonuclease family.

It is found in the cytoplasm. Functionally, cleaves both 3' and 5' ssDNA extremities of branched DNA structures. The polypeptide is Endonuclease NucS (Mycobacterium marinum (strain ATCC BAA-535 / M)).